A 178-amino-acid chain; its full sequence is Probable apo-citrate lyase phosphoribosyl-dephospho-CoA transferase (178 aa).

It belongs to the CitX family.

It catalyses the reaction apo-[citrate lyase ACP] + 2'-(5''-triphospho-alpha-D-ribosyl)-3'-dephospho-CoA = holo-[citrate lyase ACP] + diphosphate. Its function is as follows. Transfers 2-(5''-triphosphoribosyl)-3'-dephosphocoenzyme-A on a serine residue to the apo-acyl carrier protein (gamma chain) of the citrate lyase to yield holo-acyl carrier protein. The protein is Probable apo-citrate lyase phosphoribosyl-dephospho-CoA transferase of Vibrio cholerae serotype O1 (strain ATCC 39541 / Classical Ogawa 395 / O395).